Reading from the N-terminus, the 155-residue chain is Phosphoprotein pp24 (155 aa).

Residues Met-1–Lys-50 form a disordered region. Over residues Glu-34–Lys-50 the composition is skewed to basic and acidic residues. A coiled-coil region spans residues Arg-76–Val-107.

In Gallus gallus (Chicken), this protein is Phosphoprotein pp24 (MDV008).